Consider the following 82-residue polypeptide: Protein WFDC11 (82 aa).

The N-terminal stretch at 1-21 (MKPSWFPCLVFLCMLLLSALG) is a signal peptide.

The protein localises to the secreted. This Mus musculus (Mouse) protein is Protein WFDC11 (Wfdc11).